A 55-amino-acid polypeptide reads, in one-letter code: Large ribosomal subunit protein bL33 (55 aa).

Belongs to the bacterial ribosomal protein bL33 family.

This Bifidobacterium longum (strain DJO10A) protein is Large ribosomal subunit protein bL33.